A 338-amino-acid chain; its full sequence is Aspartate-semialdehyde dehydrogenase (338 aa).

NADP(+)-binding positions include 13–16 and 41–42; these read TGAV and RS. Position 101 (Arg-101) interacts with phosphate. Residue Cys-130 is the Acyl-thioester intermediate of the active site. Gln-157 contributes to the substrate binding site. Residue 160–161 coordinates NADP(+); it reads SG. Lys-214 serves as a coordination point for phosphate. Residue Arg-236 participates in substrate binding. The Proton acceptor role is filled by His-243. Gln-316 provides a ligand contact to NADP(+).

It belongs to the aspartate-semialdehyde dehydrogenase family. In terms of assembly, homodimer.

The enzyme catalyses L-aspartate 4-semialdehyde + phosphate + NADP(+) = 4-phospho-L-aspartate + NADPH + H(+). It functions in the pathway amino-acid biosynthesis; L-lysine biosynthesis via DAP pathway; (S)-tetrahydrodipicolinate from L-aspartate: step 2/4. The protein operates within amino-acid biosynthesis; L-methionine biosynthesis via de novo pathway; L-homoserine from L-aspartate: step 2/3. Its pathway is amino-acid biosynthesis; L-threonine biosynthesis; L-threonine from L-aspartate: step 2/5. In terms of biological role, catalyzes the NADPH-dependent formation of L-aspartate-semialdehyde (L-ASA) by the reductive dephosphorylation of L-aspartyl-4-phosphate. This is Aspartate-semialdehyde dehydrogenase (asd) from Synechocystis sp. (strain ATCC 27184 / PCC 6803 / Kazusa).